Consider the following 231-residue polypeptide: Probable tetraspanin tspE (231 aa).

Residues 1-21 (MTFVDNFEFNQNTPRLVRGPF) lie on the Cytoplasmic side of the membrane. A helical transmembrane segment spans residues 22-42 (IILNSIIFSLSFILLCSTGII). Residues 43–58 (IYYLNEYYLVKDLTIP) are Extracellular-facing. A helical transmembrane segment spans residues 59–79 (LGSFILSAYMVITTIVGGIAI). Residues 80–83 (WKKK) lie on the Cytoplasmic side of the membrane. Residues 84-104 (LGLHLTFMVFLVVLIVCLVGV) form a helical membrane-spanning segment. The Extracellular segment spans residues 105–195 (SAKMIVDSGN…VESILKYLGY (91 aa)). Residues 196-216 (YGIVLSVIELILLILSGFFLL) traverse the membrane as a helical segment. Over 217–231 (KTNKNVKSKSFILQD) the chain is Cytoplasmic.

This sequence belongs to the tetraspanin (TM4SF) family.

It is found in the membrane. The sequence is that of Probable tetraspanin tspE (tspE) from Dictyostelium discoideum (Social amoeba).